The chain runs to 118 residues: Large ribosomal subunit protein uL24 (118 aa).

Belongs to the universal ribosomal protein uL24 family. In terms of assembly, part of the 50S ribosomal subunit.

In terms of biological role, one of two assembly initiator proteins, it binds directly to the 5'-end of the 23S rRNA, where it nucleates assembly of the 50S subunit. Functionally, one of the proteins that surrounds the polypeptide exit tunnel on the outside of the subunit. This Prochlorococcus marinus (strain MIT 9303) protein is Large ribosomal subunit protein uL24.